The sequence spans 616 residues: Proline--tRNA ligase (616 aa).

The protein belongs to the class-II aminoacyl-tRNA synthetase family. ProS type 1 subfamily. As to quaternary structure, homodimer.

Its subcellular location is the cytoplasm. The enzyme catalyses tRNA(Pro) + L-proline + ATP = L-prolyl-tRNA(Pro) + AMP + diphosphate. Its function is as follows. Catalyzes the attachment of proline to tRNA(Pro) in a two-step reaction: proline is first activated by ATP to form Pro-AMP and then transferred to the acceptor end of tRNA(Pro). As ProRS can inadvertently accommodate and process non-cognate amino acids such as alanine and cysteine, to avoid such errors it has two additional distinct editing activities against alanine. One activity is designated as 'pretransfer' editing and involves the tRNA(Pro)-independent hydrolysis of activated Ala-AMP. The other activity is designated 'posttransfer' editing and involves deacylation of mischarged Ala-tRNA(Pro). The misacylated Cys-tRNA(Pro) is not edited by ProRS. The chain is Proline--tRNA ligase from Streptococcus mutans serotype c (strain ATCC 700610 / UA159).